The following is a 173-amino-acid chain: MAIILGIDPGSRVTGYGVIRQVGRQLSYLGSGCIRTKVDDLPSRLKLIYAGVTEIITQFQPDYFAIEQVFMAKNADSALKLGQARGVAIVAAVNQELPVFEYAARQVKQTVVGMGSAEKSQVQHMVRTLLKLPANPQADAADALAIAITHCHVSQNAMQMSESRLNLTRGRLR.

Catalysis depends on residues Asp8, Glu67, and Asp139. Asp8, Glu67, and Asp139 together coordinate Mg(2+).

This sequence belongs to the RuvC family. In terms of assembly, homodimer which binds Holliday junction (HJ) DNA. The HJ becomes 2-fold symmetrical on binding to RuvC with unstacked arms; it has a different conformation from HJ DNA in complex with RuvA. In the full resolvosome a probable DNA-RuvA(4)-RuvB(12)-RuvC(2) complex forms which resolves the HJ. Requires Mg(2+) as cofactor.

The protein localises to the cytoplasm. The enzyme catalyses Endonucleolytic cleavage at a junction such as a reciprocal single-stranded crossover between two homologous DNA duplexes (Holliday junction).. In terms of biological role, the RuvA-RuvB-RuvC complex processes Holliday junction (HJ) DNA during genetic recombination and DNA repair. Endonuclease that resolves HJ intermediates. Cleaves cruciform DNA by making single-stranded nicks across the HJ at symmetrical positions within the homologous arms, yielding a 5'-phosphate and a 3'-hydroxyl group; requires a central core of homology in the junction. The consensus cleavage sequence is 5'-(A/T)TT(C/G)-3'. Cleavage occurs on the 3'-side of the TT dinucleotide at the point of strand exchange. HJ branch migration catalyzed by RuvA-RuvB allows RuvC to scan DNA until it finds its consensus sequence, where it cleaves and resolves the cruciform DNA. This Shigella flexneri serotype 5b (strain 8401) protein is Crossover junction endodeoxyribonuclease RuvC.